A 266-amino-acid chain; its full sequence is tRNA pseudouridine synthase A (266 aa).

The active-site Nucleophile is D52. Residue Y113 participates in substrate binding.

This sequence belongs to the tRNA pseudouridine synthase TruA family. As to quaternary structure, homodimer.

The catalysed reaction is uridine(38/39/40) in tRNA = pseudouridine(38/39/40) in tRNA. Its function is as follows. Formation of pseudouridine at positions 38, 39 and 40 in the anticodon stem and loop of transfer RNAs. In Agrobacterium fabrum (strain C58 / ATCC 33970) (Agrobacterium tumefaciens (strain C58)), this protein is tRNA pseudouridine synthase A.